A 933-amino-acid chain; its full sequence is Progesterone receptor (933 aa).

The segment at 1-164 (MTELKAKGPR…PATQGVLSPL (164 aa)) is AF3; mediates transcriptional activation. The tract at residues 1–256 (MTELKAKGPR…AAAGGGAAAV (256 aa)) is disordered. Positions 1–566 (MTELKAKGPR…YSFESLPQKI (566 aa)) are modulating, Pro-Rich. Position 20 is a phosphoserine (Ser-20). The short motif at 55–59 (LDGLL) is the LXXL motif 1 element. Ser-81 is subject to Phosphoserine. The LXXL motif 2 signature appears at 115–119 (LDTLL). Phosphoserine is present on residues Ser-130 and Ser-162. The mediates transcriptional transrepression stretch occupies residues 165–305 (MSRSGCKAGD…LATTMMDFIH (141 aa)). The Nuclear localization signal motif lies at 183-187 (KVLPR). Phosphoserine occurs at positions 190 and 213. A compositionally biased stretch (acidic residues) spans 220–231 (EVEEEDGSESEE). Low complexity predominate over residues 232–246 (SAGPLLKGKPRALGG). Phosphoserine; by MAPK1 is present on Ser-294. The segment covering 335–356 (AXSAFAPPRSSPSASSTPVAVG) has biased composition (low complexity). The disordered stretch occupies residues 335 to 378 (AXSAFAPPRSSPSASSTPVAVGDFPDCAYPPDAEPKDDAYPLYS). Phosphoserine; by MAPK is present on Ser-345. Lys-388 participates in a covalent cross-link: Glycyl lysine isopeptide (Lys-Gly) (interchain with G-Cter in SUMO); alternate. Residue Lys-388 forms a Glycyl lysine isopeptide (Lys-Gly) (interchain with G-Cter in ubiquitin); alternate linkage. Ser-400 is subject to Phosphoserine; by CDK2. The interval 415–452 (PDFPLGPPPPLPPRAPPSRPGEAAVTAAPASASVSSAS) is disordered. The segment covering 418 to 433 (PLGPPPPLPPRAPPSR) has biased composition (pro residues). Over residues 434–452 (PGEAAVTAAPASASVSSAS) the composition is skewed to low complexity. The segment at 456–546 (STLECILYKA…VYPPYLNYLR (91 aa)) is AF1; mediates transcriptional activation. Lys-531 participates in a covalent cross-link: Glycyl lysine isopeptide (Lys-Gly) (interchain with G-Cter in SUMO). 2 consecutive NR C4-type zinc fingers follow at residues 567-587 (CLIC…CGSC) and 603-627 (CAGR…LRKC). The nuclear receptor DNA-binding region spans 567–639 (CLICGDEASG…AGMVLGGRKF (73 aa)). Ser-676 bears the Phosphoserine mark. The region spanning 679 to 913 (QDIQLIPPLI…EFPEMMSEVI (235 aa)) is the NR LBD domain. The tract at residues 687 to 933 (LINLLMSIEP…MVKPLLFHKK (247 aa)) is AF2; mediates transcriptional activation. Arg-766 contributes to the progesterone binding site.

The protein belongs to the nuclear hormone receptor family. Interacts with SMARD1 and UNC45A. Interacts with CUEDC2; the interaction promotes ubiquitination, decreases sumoylation, and represses transcriptional activity. Interacts with PIAS3; the interaction promotes sumoylation of PR in a hormone-dependent manner, inhibits DNA-binding, and alters nuclear export. Interacts with SP1; the interaction requires ligand-induced phosphorylation on Ser-345 by ERK1/2-MAPK. Interacts with PRMT2. Interacts with NCOA2 and NCOA1. Interacts with KLF9. Interacts with GTF2B. Phosphorylated on multiple serine sites. Several of these sites are hormone-dependent. Phosphorylation on Ser-294 is highly hormone-dependent and modulates ubiquitination and sumoylation on Lys-388. Phosphorylation on Ser-102 and Ser-345 requires induction by hormone. Basal phosphorylation on Ser-81, Ser-162, Ser-190 and Ser-400 is increased in response to progesterone and can be phosphorylated in vitro by the CDK2-A1 complex. Increased levels of phosphorylation on Ser-400 also in the presence of EGF, heregulin, IGF, PMA and FBS. Phosphorylation at this site by CDK2 is ligand-independent, and increases nuclear translocation and transcriptional activity. Phosphorylation at Ser-162 and Ser-294, but not at Ser-190, is impaired during the G(2)/M phase of the cell cycle. Phosphorylation on Ser-345 by ERK1/2 MAPK is required for interaction with SP1. In terms of processing, sumoylation is hormone-dependent and represses transcriptional activity. Sumoylation on all three sites is enhanced by PIAS3. Desumoylated by SENP1. Sumoylation on Lys-388, the main site of sumoylation, is repressed by ubiquitination on the same site, and modulated by phosphorylation at Ser-294. Post-translationally, ubiquitination is hormone-dependent and represses sumoylation on the same site. Promoted by MAPK-mediated phosphorylation on Ser-294. Ubiquitinated by UBR5, leading to its degradation: UBR5 specifically recognizes and binds ligand-bound PGR when it is not associated with coactivators (NCOAs). In presence of NCOAs, the UBR5-degron is not accessible, preventing its ubiquitination and degradation. Palmitoylated by ZDHHC7 and ZDHHC21. Palmitoylation is required for plasma membrane targeting and for rapid intracellular signaling via ERK and AKT kinases and cAMP generation.

Its subcellular location is the nucleus. The protein resides in the cytoplasm. Its function is as follows. The steroid hormones and their receptors are involved in the regulation of eukaryotic gene expression and affect cellular proliferation and differentiation in target tissues. Transcriptional activator of several progesteron-dependent promoters in a variety of cell types. Involved in activation of SRC-dependent MAPK signaling on hormone stimulation. This chain is Progesterone receptor (PGR), found in Pan troglodytes (Chimpanzee).